A 183-amino-acid polypeptide reads, in one-letter code: MTTKSKTLEIDNNTFLLLEGNLKRIFATPIGYTTFREFQNVIFNCAQGQQELANFLFEMLINGKLLQELPAGQKQSAQSLIVQFMMLIRVAKDIHERGEFINFITSDMLAQQERCVFLNRLSRVDGQEFLLMTDVQNTCHLIRHLLSRLLEAQKNPIGEKNLQEVQEDLDSLRAHFEELTKSM.

This sequence belongs to the chlamydial CPn_0803/CT_584/TC_0873 family.

This is an uncharacterized protein from Chlamydia muridarum (strain MoPn / Nigg).